A 368-amino-acid chain; its full sequence is Glutamate 5-kinase 1 (368 aa).

K12 is a binding site for ATP. S52, D135, and N147 together coordinate substrate. ATP is bound by residues 167-168 (SD) and 209-215 (TGGMKTK). In terms of domain architecture, PUA spans 274–348 (QGEVVVDGSF…DNEQSEFSEK (75 aa)).

This sequence belongs to the glutamate 5-kinase family.

It is found in the cytoplasm. It carries out the reaction L-glutamate + ATP = L-glutamyl 5-phosphate + ADP. The protein operates within amino-acid biosynthesis; L-proline biosynthesis; L-glutamate 5-semialdehyde from L-glutamate: step 1/2. In terms of biological role, catalyzes the transfer of a phosphate group to glutamate to form L-glutamate 5-phosphate. This is Glutamate 5-kinase 1 from Pseudoalteromonas translucida (strain TAC 125).